The sequence spans 935 residues: Potassium channel AKT1 (935 aa).

Over 1 to 106 (MARWGAARMA…YDRRYRIWET (106 aa)) the chain is Cytoplasmic. A helical transmembrane segment spans residues 107 to 127 (FLIVLVVYSAWVSPFEFGFIP). Residues 128–136 (KPTGALATA) are Extracellular-facing. The helical transmembrane segment at 137-157 (DNVVNAFFAVDIILTFFVAYL) threads the bilayer. The Cytoplasmic segment spans residues 158–178 (DKMSYMLEDDPKKIAWRYSTT). Residues 179-199 (WLVLDVASTIPSEFARRILPS) traverse the membrane as a helical segment. Over 200–205 (KLRSYG) the chain is Extracellular. A helical; Voltage-sensor membrane pass occupies residues 206–226 (FFNMLRLWRLRRVSSLFSRLE). Over 227 to 240 (KDRHFNYFWVRCAK) the chain is Cytoplasmic. Residues 241–261 (LICVTLFAVHCAACFYYLLAD) traverse the membrane as a helical segment. Residues 262–288 (RYPVPTSTWIGNYMADFHERSLWIRYV) are Extracellular-facing. An intramembrane region (pore-forming) is located at residues 289 to 308 (TSVYWSITTLTTVGYGDLHA). Residues 309 to 312 (ENTR) are Extracellular-facing. The chain crosses the membrane as a helical span at residues 313-333 (EMIFNIFYMLFNLGLTAYLIG). Over 334–935 (NMTNLVVHGT…WDAEKMKGKS (602 aa)) the chain is Cytoplasmic. 419-538 (LFQGVSNDLI…TIIMNNLIQF (120 aa)) is an a nucleoside 3',5'-cyclic phosphate binding site. 6 ANK repeats span residues 565 to 594 (DLPITLCFAVTRGDDFLLHQLLKRGMDPNE), 598 to 627 (DGHTALHIAASKGNEQCVRLLLEYGADPNA), 631 to 660 (EGKVPLWEALCEKHAAVVQLLVEGGADLSS), 662 to 691 (DTGLYACIAVEESDTELLNDIIHYGGDVNR), 695 to 724 (DGTTALHRAVCDGNVQMAELLLEHGADIDK), and 728 to 757 (NGWTPRALAEQQGHDDIQLLFRSRKAATAS). Residues 826-854 (SQAQRETDHPLSRGGLAATGSPNPSSGSR) form a disordered region. A compositionally biased stretch (polar residues) spans 845 to 854 (GSPNPSSGSR). Residues 859-935 (RVTISCPEKG…WDAEKMKGKS (77 aa)) form the KHA domain.

Belongs to the potassium channel family. Plant (TC 1.A.1.4) subfamily. In terms of assembly, the potassium channel is probably a homo- or heterotetrameric complex of pore-forming subunits. Expressed in roots and coleoptile of young seedlings.

It localises to the membrane. Highly selective inward-rectifying potassium channel that mediates potassium uptake by plant roots. Assuming opened or closed conformations in response to the voltage difference across the membrane, the channel is activated by hyperpolarization. May be a major salt-sensitive potassium channel in roots. The sequence is that of Potassium channel AKT1 (AKT1) from Oryza sativa subsp. japonica (Rice).